A 345-amino-acid polypeptide reads, in one-letter code: Putative membrane protein ORF59 (345 aa).

The next 4 helical transmembrane spans lie at 46–63, 101–118, 147–165, and 265–286; these read LVFA…MMLI, IVFV…LVFL, IFGI…FSIL, and VVPV…WMVI.

The protein resides in the membrane. The sequence is that of Putative membrane protein ORF59 (ORF59) from Ictalurid herpesvirus 1 (strain Auburn) (IcHV-1).